Consider the following 125-residue polypeptide: Basic leucine zipper transcriptional factor ATF-like (125 aa).

Residues 1-14 (MPHSSDSSDSSFSR) are compositionally biased toward low complexity. The interval 1-58 (MPHSSDSSDSSFSRSPPPGKQDSSDDVRRVQRREKNRIAAQKSRQRQTQKADTLHLES) is disordered. One can recognise a bZIP domain in the interval 26 to 89 (DVRRVQRREK…KYFTSVLNSH (64 aa)). Positions 28–50 (RRVQRREKNRIAAQKSRQRQTQK) are basic motif. Ser43 carries the phosphoserine modification. At Thr48 the chain carries Phosphothreonine. The segment at 54–75 (LHLESEDLEKQNAALRKEIKQL) is leucine-zipper.

This sequence belongs to the bZIP family. Heterodimer; mainly heterodimerizes with JUNB. The BATF-JUNB heterodimer interacts with IRF4 and IRF8. Interacts (via bZIP domain) with IRF4 and IRF8; the interaction is direct. Also forms heterodimers with JUN and JUND. Also interacts with IFI35. In terms of processing, phosphorylated on serine and threonine residues and at least one tyrosine residue. Phosphorylation at Ser-43 inhibit DNA binding activity and transforms it as a negative regulator of AP-1 mediated transcription. Phosphorylated. Expressed at highest levels in lung, and at lower levels in placenta, liver, kidney, spleen, and peripheral blood. Detected in SW480 colorectal cancer cell line and several hematopoietic tumor cell lines, including Raji Burkitt's lymphoma. Strongly expressed in mature B- and T-lymphocytes. Also expressed in moderate levels in lymph node and appendix and at low levels in thymus and bone marrow.

It is found in the nucleus. The protein localises to the cytoplasm. In terms of biological role, AP-1 family transcription factor that controls the differentiation of lineage-specific cells in the immune system: specifically mediates the differentiation of T-helper 17 cells (Th17), follicular T-helper cells (TfH), CD8(+) dendritic cells and class-switch recombination (CSR) in B-cells. Acts via the formation of a heterodimer with JUNB that recognizes and binds DNA sequence 5'-TGA[CG]TCA-3'. The BATF-JUNB heterodimer also forms a complex with IRF4 (or IRF8) in immune cells, leading to recognition of AICE sequence (5'-TGAnTCA/GAAA-3'), an immune-specific regulatory element, followed by cooperative binding of BATF and IRF4 (or IRF8) and activation of genes. Controls differentiation of T-helper cells producing interleukin-17 (Th17 cells) by binding to Th17-associated gene promoters: regulates expression of the transcription factor RORC itself and RORC target genes such as IL17 (IL17A or IL17B). Also involved in differentiation of follicular T-helper cells (TfH) by directing expression of BCL6 and MAF. In B-cells, involved in class-switch recombination (CSR) by controlling the expression of both AICDA and of germline transcripts of the intervening heavy-chain region and constant heavy-chain region (I(H)-C(H)). Following infection, can participate in CD8(+) dendritic cell differentiation via interaction with IRF4 and IRF8 to mediate cooperative gene activation. Regulates effector CD8(+) T-cell differentiation by regulating expression of SIRT1. Following DNA damage, part of a differentiation checkpoint that limits self-renewal of hematopoietic stem cells (HSCs): up-regulated by STAT3, leading to differentiation of HSCs, thereby restricting self-renewal of HSCs. This is Basic leucine zipper transcriptional factor ATF-like (BATF) from Homo sapiens (Human).